The following is a 338-amino-acid chain: Tetraacyldisaccharide 4'-kinase (338 aa).

Residue 67–74 (IAGGAGKT) coordinates ATP.

It belongs to the LpxK family.

The enzyme catalyses a lipid A disaccharide + ATP = a lipid IVA + ADP + H(+). The protein operates within glycolipid biosynthesis; lipid IV(A) biosynthesis; lipid IV(A) from (3R)-3-hydroxytetradecanoyl-[acyl-carrier-protein] and UDP-N-acetyl-alpha-D-glucosamine: step 6/6. Its function is as follows. Transfers the gamma-phosphate of ATP to the 4'-position of a tetraacyldisaccharide 1-phosphate intermediate (termed DS-1-P) to form tetraacyldisaccharide 1,4'-bis-phosphate (lipid IVA). The sequence is that of Tetraacyldisaccharide 4'-kinase from Acidovorax sp. (strain JS42).